The sequence spans 530 residues: Ubiquitin carboxyl-terminal hydrolase 17-like protein 18 (530 aa).

Residues 80 to 375 form the USP domain; sequence AGLQNMGNTC…QAYVLFYIQK (296 aa). Cys-89 functions as the Nucleophile in the catalytic mechanism. The active-site Proton acceptor is the His-334. Basic and acidic residues-rich tracts occupy residues 382–392 and 398–413; these read SESVSRGREPR and DTDR…RDHP. 2 disordered regions span residues 382 to 414 and 509 to 530; these read SESV…DHPC and RGRA…LVCQ. Positions 510–524 are enriched in basic residues; it reads GRARRSKGKNKHSKR.

Belongs to the peptidase C19 family. USP17 subfamily.

It localises to the nucleus. It is found in the endoplasmic reticulum. It carries out the reaction Thiol-dependent hydrolysis of ester, thioester, amide, peptide and isopeptide bonds formed by the C-terminal Gly of ubiquitin (a 76-residue protein attached to proteins as an intracellular targeting signal).. Its function is as follows. Deubiquitinating enzyme that removes conjugated ubiquitin from specific proteins to regulate different cellular processes that may include cell proliferation, progression through the cell cycle, apoptosis, cell migration, and the cellular response to viral infection. This Homo sapiens (Human) protein is Ubiquitin carboxyl-terminal hydrolase 17-like protein 18 (USP17L18).